A 344-amino-acid polypeptide reads, in one-letter code: MRKSVKVGNVVIGGGAPVSVQSMTTTKTADVERTISQIKRLERAGCEIIRVAVQDEEDAKAIRRIKEQIEIPLVADIQFDYRLAILSIDNGADKIRINPGNMSRDRLKDVVAAAKGKGIPIRVGANVGSIKRRTSERWKDLAESALEEVRLLEKEGFYDIVVSVKSSDILETIKANEYIAEKIEYPIHLGVTEAGVSETAVVKSSIAIGHLLLKNIGDTIRVSISGDPVREVIVGKKILIALGLREGVEVIACPTCGRAEIDVENMAKMIEENFFHVQKRLKIAVMGCVVNGIGEGKDADLGVAGLRDGAVIFVKGEIKERVSKEFVLERLKHYLNELLEEVER.

Cys-253, Cys-256, Cys-288, and Glu-295 together coordinate [4Fe-4S] cluster.

Belongs to the IspG family. The cofactor is [4Fe-4S] cluster.

It catalyses the reaction (2E)-4-hydroxy-3-methylbut-2-enyl diphosphate + oxidized [flavodoxin] + H2O + 2 H(+) = 2-C-methyl-D-erythritol 2,4-cyclic diphosphate + reduced [flavodoxin]. The protein operates within isoprenoid biosynthesis; isopentenyl diphosphate biosynthesis via DXP pathway; isopentenyl diphosphate from 1-deoxy-D-xylulose 5-phosphate: step 5/6. Converts 2C-methyl-D-erythritol 2,4-cyclodiphosphate (ME-2,4cPP) into 1-hydroxy-2-methyl-2-(E)-butenyl 4-diphosphate. The protein is 4-hydroxy-3-methylbut-2-en-1-yl diphosphate synthase (flavodoxin) of Thermotoga petrophila (strain ATCC BAA-488 / DSM 13995 / JCM 10881 / RKU-1).